The following is a 590-amino-acid chain: Aspartate--tRNA(Asp/Asn) ligase (590 aa).

Glu173 serves as a coordination point for L-aspartate. The aspartate stretch occupies residues 197–200; that stretch reads QIFK. Residue Arg219 coordinates L-aspartate. Residues 219–221 and Gln228 contribute to the ATP site; that span reads RDE. Residue His450 coordinates L-aspartate. Glu484 serves as a coordination point for ATP. L-aspartate is bound at residue Arg491. 536-539 provides a ligand contact to ATP; the sequence is GLDR.

The protein belongs to the class-II aminoacyl-tRNA synthetase family. Type 1 subfamily. As to quaternary structure, homodimer.

Its subcellular location is the cytoplasm. The enzyme catalyses tRNA(Asx) + L-aspartate + ATP = L-aspartyl-tRNA(Asx) + AMP + diphosphate. Aspartyl-tRNA synthetase with relaxed tRNA specificity since it is able to aspartylate not only its cognate tRNA(Asp) but also tRNA(Asn). Reaction proceeds in two steps: L-aspartate is first activated by ATP to form Asp-AMP and then transferred to the acceptor end of tRNA(Asp/Asn). This chain is Aspartate--tRNA(Asp/Asn) ligase, found in Coxiella burnetii (strain RSA 331 / Henzerling II).